Here is a 338-residue protein sequence, read N- to C-terminus: MDPRSEVVLRQQQYLAIKILLINPPADELAQQLAHKHQVSVWTWNFADHQYFQHQSIQSDFAVTFPDQIPDQVIIFVPKSKELLSYLLHVVVSHLPAGQHIFLVGEKKGGVERASKQLQSYGKTVKLDSARHCQLWQTTIETTEQLKPLEQWLKHYSVKNENIQLEIYALPGVFSQNHLDIGTAVLLPYLNQIKLGKIADFGCGAGVISAYLAQLSPHNEIHALDIDAFALRSTEFTFQRNGLASERLHLHAVTGIQDAPKALDVIVSNPPFHQGIHTDYSASEGLCKTAKQHLNTSGELWIVANRFLNYPLLIEQTFGQCQVKTDQQGFKILYAKAT.

The protein belongs to the methyltransferase superfamily. RsmC family. Monomer.

The protein localises to the cytoplasm. The catalysed reaction is guanosine(1207) in 16S rRNA + S-adenosyl-L-methionine = N(2)-methylguanosine(1207) in 16S rRNA + S-adenosyl-L-homocysteine + H(+). Its function is as follows. Specifically methylates the guanine in position 1207 of 16S rRNA in the 30S particle. This Acinetobacter baylyi (strain ATCC 33305 / BD413 / ADP1) protein is Ribosomal RNA small subunit methyltransferase C.